The primary structure comprises 506 residues: Dolabradiene monooxygenase (506 aa).

A helical membrane pass occupies residues 5 to 25 (VLLAVAMVALIAVLSKLKSLL). Residue Cys443 participates in heme binding.

The protein belongs to the cytochrome P450 family. Requires heme as cofactor.

It localises to the membrane. The catalysed reaction is dolabradiene + reduced [NADPH--hemoprotein reductase] + O2 = 15,16-epoxydolabrene + oxidized [NADPH--hemoprotein reductase] + H2O + H(+). It catalyses the reaction 15,16-epoxydolabrene + reduced [NADPH--hemoprotein reductase] + O2 = 3beta-hydroxy-15,16-epoxydolabrene + oxidized [NADPH--hemoprotein reductase] + H2O + H(+). Involved in the production of antifungal dolabralexin phytoalexins in response to biotic and abiotic stresses. Catalyzes the epoxidation of dolabradiene at C-16, followed by hydroxylation at C-3, to yield the epoxides 15,16-epoxydolabrene (epoxydolabrene) and 3b-hydroxy-15,16-epoxydolabrene (epoxydolabranol). This Zea mays (Maize) protein is Dolabradiene monooxygenase.